A 148-amino-acid polypeptide reads, in one-letter code: Large ribosomal subunit protein uL15 (148 aa).

The interval 14–54 (HRKKRVGCGEGGGHGKTSGRGGKGQTARSGSSIRPGFEGGQ) is disordered. Positions 21 to 37 (CGEGGGHGKTSGRGGKG) are enriched in gly residues.

Belongs to the universal ribosomal protein uL15 family. As to quaternary structure, part of the 50S ribosomal subunit.

Functionally, binds to the 23S rRNA. The polypeptide is Large ribosomal subunit protein uL15 (Opitutus terrae (strain DSM 11246 / JCM 15787 / PB90-1)).